A 1155-amino-acid polypeptide reads, in one-letter code: uncharacterized protein (1155 aa).

The signal sequence occupies residues 1–19 (MKKNIFITSLLILLLLLSS). Residue C20 is the site of N-palmitoyl cysteine attachment. C20 carries S-diacylglycerol cysteine lipidation. Transmembrane regions (helical) follow at residues 289–309 (ISVSAILTLYIMFTVLSFLIG), 395–415 (LGFIYIILYLIALYFIFFLIF), 424–444 (ALITIGMIIIMGPIFICFMLF), and 459–479 (ISYALQPIILFAGIAFISMII).

It belongs to the TrbL/VirB6 family.

It is found in the cell membrane. This is an uncharacterized protein from Rickettsia prowazekii (strain Madrid E).